A 199-amino-acid polypeptide reads, in one-letter code: LIM domain-containing protein WLIM2b (199 aa).

LIM zinc-binding domains follow at residues 8–68 and 106–166; these read QKCK…LFKE and EKCA…LFKE.

Interacts with F-actin. As to expression, expressed in roots, leaves, stems, flowers and siliques. Barely detected in pollen.

Its subcellular location is the cytoplasm. The protein localises to the cytoskeleton. Its function is as follows. Binds to actin filaments and promotes cross-linking into thick bundles. Has an actin-stabilizing activity. The actin regulatory activities are not regulated by pH and [Ca(2+)]. This chain is LIM domain-containing protein WLIM2b, found in Arabidopsis thaliana (Mouse-ear cress).